The following is an 860-amino-acid chain: Ras GTPase-activating-like protein gapA (860 aa).

A compositionally biased stretch (acidic residues) spans 1 to 20 (MEGLEIEDEDVILLDEDDDS). The segment at 1-48 (MEGLEIEDEDVILLDEDDDSSSSSTVNNSSSNIKNNGNTNNNIGNDDS) is disordered. Residues 21 to 46 (SSSSTVNNSSSNIKNNGNTNNNIGND) show a composition bias toward low complexity. Residues 146 to 185 (AEIQELKRNMVAEIRRNHLLERDVNKLDKRIALLIKHRSN) are a coiled coil. The region spanning 269–515 (FLILSLFRLA…SIVRQYLEDL (247 aa)) is the Ras-GAP domain. Residues 663–732 (NNPQLSSNAE…TIALRDLRKH (70 aa)) are a coiled coil.

As to quaternary structure, heterotetramer. Quaternary complex with activated rac1A, ctxA and ctxB in the absence of rgaA.

Functionally, part of signaling pathway that is required for completion of cytokinesis. gapA and rgaA control cortexillin localization to the cleavage furrow and hence may be involved in cleavage of the midbody in the final stage of cytokinesis by regulating the actin cytoskeleton. Forms a complex by linking activated rac1A to ctxA in the absence of rgaA. Assembly of this complex is necessary for the recruitment of cortexillin to the midzone of the dividing cell. The protein is Ras GTPase-activating-like protein gapA (gapA) of Dictyostelium discoideum (Social amoeba).